Consider the following 616-residue polypeptide: ATP-dependent RNA helicase VAD1 (616 aa).

Residues 1–35 form a disordered region; that stretch reads MASSSTLANDDWKQGLAAPPKDLRPQTEDVTATQG. Residues 36-64 carry the Q motif motif; that stretch reads SRFEDFGLRRELLMGIYTAGFERPSPIQE. Positions 67-238 constitute a Helicase ATP-binding domain; the sequence is IPMALTGRDI…DQHMVQPYEI (172 aa). Position 80-87 (80-87) interacts with ATP; it reads AKNGTGKT. The DEAD box signature appears at 186-189; the sequence is DEAD. The 161-residue stretch at 248–408 folds into the Helicase C-terminal domain; sequence GVTQYYAYVE…PIPAVIDPVL (161 aa). The tract at residues 416–616 is disordered; sequence EEERESPPPK…GASQSQQAQA (201 aa). Low complexity-rich tracts occupy residues 427–441, 458–500, and 508–523; these read AAIAAPPAQQQPQQR, PAAA…NSSP, and YPQQAPTQAQGPAQMQ. The span at 529–545 shows a compositional bias: polar residues; it reads PATQPQASAQIPVQGQT. Composition is skewed to low complexity over residues 550–579 and 606–616; these read PRAQQQGQQQPSQPGQAEGQSQPNRRPNTG and AGASQSQQAQA.

This sequence belongs to the DEAD box helicase family. DDX6/DHH1 subfamily.

It localises to the cytoplasm. Its subcellular location is the P-body. It carries out the reaction ATP + H2O = ADP + phosphate + H(+). ATP-dependent RNA helicase involved in mRNA turnover, and more specifically in mRNA decapping. Is involved in G1/S DNA-damage checkpoint recovery, probably through the regulation of the translational status of a subset of mRNAs. May also have a role in translation and mRNA nuclear export. Blocks autophagy in nutrient-rich conditions by, at least partly, binding and repressing the expression of a set of ATG genes, including ATG3, ATG7, ATG8, ATG19, ATG20 and ATG22. VAD1-mediated repression of autophagy is regulated by TOR-dependent phosphorylation of the decapping enzyme DCP2. Regulates multiple virulence-associated genes. Repression of autophagy by VAD1 also regulates the pathogenesis. This is ATP-dependent RNA helicase VAD1 from Cryptococcus neoformans var. grubii serotype A (strain H99 / ATCC 208821 / CBS 10515 / FGSC 9487) (Filobasidiella neoformans var. grubii).